The primary structure comprises 493 residues: MPRGFLVKRTKRSGSSYRARPVEPLFPPPGPLAAQSSPEEPGRGLLGSPCLAPPQDDAEWGAGGGDGPGPSPARPAGPELRRAFLERCLRSPVSAESFPSATAFCSAAPAAVTSGEELVPPQVPVSVPIPVPGPAPHGLQRRGKGAPVCASAPAAVRKPKAVRRLSFADEVTTSPVLGLKIKEEEPGAPARALGGVRTPLGEFICQLCKHQYADPFALAQHRCSRIVRVEYRCPECDKVFSCPANLASHRRWHKPRPTPACAASKPPHAPLTPPDPSLATGKENGRVPRTDDQHPQAPDSSGDGQHRDSAARPGLQALVYPEAARPQAPYPEVILGRHGPGSSGASAGATSEVFVCPYCHKKFRRQAYLRKHLGTHETGSARAPTPGFGSERTAPLTFACPLCGAHFPSADIREKHRLWHAVREELLLPALVGAPSEAGPGGASDGSAQQIFSCKYCPSTFFSSPGLTRHINKCHPSESRQVLLLQMPLRPGC.

The segment covering 1-12 has biased composition (basic residues); sequence MPRGFLVKRTKR. Residues 1–20 are SNAG domain; the sequence is MPRGFLVKRTKRSGSSYRAR. The tract at residues 1–77 is disordered; sequence MPRGFLVKRT…PGPSPARPAG (77 aa). Residues 203–223 form a C2H2-type 1; atypical zinc finger; sequence FICQLCKHQYADPFALAQHRC. The C2H2-type 2 zinc finger occupies 231–253; that stretch reads YRCPECDKVFSCPANLASHRRWH. Residues 248-310 are disordered; that stretch reads SHRRWHKPRP…SGDGQHRDSA (63 aa). The segment covering 267–276 has biased composition (pro residues); it reads PHAPLTPPDP. The span at 283 to 294 shows a compositional bias: basic and acidic residues; the sequence is ENGRVPRTDDQH. 3 consecutive C2H2-type zinc fingers follow at residues 354–376, 398–420, and 452–475; these read FVCPYCHKKFRRQAYLRKHLGTH, FACPLCGAHFPSADIREKHRLWH, and FSCKYCPSTFFSSPGLTRHINKCH.

In terms of tissue distribution, expressed in spleen, stomach, liver, kidney and testis. In the pancreas, expressed in islet cells, including insulin-producing beta-cells, but not in acinar cells (at protein level). In the brain, expressed in the neuronal cells of the cerebral cortex, the Purkinje cells of the cerebellum and the hippocampal region including CA1 and CA3 (at protein level).

The protein resides in the cytoplasm. It localises to the nucleus. Its function is as follows. May function as a growth suppressor or tumor suppressor in liver cells and in certain neurons. The chain is Insulinoma-associated protein 2 (Insm2) from Mus musculus (Mouse).